The sequence spans 1441 residues: Probable ubiquitin-conjugating enzyme E2 R521 (1441 aa).

Residues Tyr20–Met40 traverse the membrane as a helical segment. Residues Asn63–Asp89 adopt a coiled-coil conformation. The span at Val180 to Ser199 shows a compositional bias: basic and acidic residues. Disordered stretches follow at residues Val180 to Ile207 and Ile283 to Val305. Over residues Lys286 to Ser303 the composition is skewed to low complexity. Positions Thr340–Lys368 form a coiled coil. The segment covering Thr505–Glu538 has biased composition (low complexity). 2 disordered regions span residues Thr505 to Lys554 and Asn577 to Gly605. The segment covering Val539–Glu549 has biased composition (acidic residues). The UBC core domain maps to Ala1217–Met1380. Cys1306 functions as the Glycyl thioester intermediate in the catalytic mechanism.

The protein belongs to the ubiquitin-conjugating enzyme family.

It is found in the membrane. The catalysed reaction is S-ubiquitinyl-[E1 ubiquitin-activating enzyme]-L-cysteine + [E2 ubiquitin-conjugating enzyme]-L-cysteine = [E1 ubiquitin-activating enzyme]-L-cysteine + S-ubiquitinyl-[E2 ubiquitin-conjugating enzyme]-L-cysteine.. Its pathway is protein modification; protein ubiquitination. Catalyzes the covalent attachment of ubiquitin to other proteins. In Acanthamoeba polyphaga (Amoeba), this protein is Probable ubiquitin-conjugating enzyme E2 R521.